The sequence spans 588 residues: Adenine deaminase (588 aa).

It belongs to the metallo-dependent hydrolases superfamily. Adenine deaminase family. As to quaternary structure, homodimer. Mn(2+) is required as a cofactor.

It catalyses the reaction adenine + H2O + H(+) = hypoxanthine + NH4(+). This Escherichia coli O6:H1 (strain CFT073 / ATCC 700928 / UPEC) protein is Adenine deaminase.